The primary structure comprises 326 residues: Aquaporin-3 (326 aa).

2 helical membrane passes run 24 to 44 (LAEF…IITA) and 64 to 84 (LAFG…GISG). The short motif at 88 to 90 (NPA) is the NPA 1 element. A helical membrane pass occupies residues 107-127 (LVYIFMQYMGAFFAASILYAV). Residue N146 is glycosylated (N-linked (GlcNAc...) asparagine). The next 2 membrane-spanning stretches (helical) occupy residues 166 to 186 (IFDA…IIDP) and 196 to 216 (IPLY…YNAG). An NPA 2 motif is present at residues 220 to 222 (NPA). A helical transmembrane segment spans residues 247–267 (LWWLVPVIGPHVGGLLGGVTY). A glycan (N-linked (GlcNAc...) asparagine) is linked at N294.

Belongs to the MIP/aquaporin (TC 1.A.8) family.

It localises to the cell membrane. Aquaglyceroporin that may modulate the water content and osmolytes during anhydrobiosis. The sequence is that of Aquaporin-3 from Milnesium tardigradum (Water bear).